The primary structure comprises 366 residues: 3-isopropylmalate dehydrogenase (366 aa).

Residue 78–91 participates in NAD(+) binding; the sequence is GPQWTHLKGSESPE. Substrate contacts are provided by R99, R109, R138, and D227. Residues D227, D251, and D255 each contribute to the Mg(2+) site. Residue 285–297 participates in NAD(+) binding; it reads GSAPDIAEKNIAN.

This sequence belongs to the isocitrate and isopropylmalate dehydrogenases family. LeuB type 1 subfamily. In terms of assembly, homodimer. Requires Mg(2+) as cofactor. Mn(2+) is required as a cofactor.

The protein resides in the cytoplasm. The enzyme catalyses (2R,3S)-3-isopropylmalate + NAD(+) = 4-methyl-2-oxopentanoate + CO2 + NADH. Its pathway is amino-acid biosynthesis; L-leucine biosynthesis; L-leucine from 3-methyl-2-oxobutanoate: step 3/4. Its function is as follows. Catalyzes the oxidation of 3-carboxy-2-hydroxy-4-methylpentanoate (3-isopropylmalate) to 3-carboxy-4-methyl-2-oxopentanoate. The product decarboxylates to 4-methyl-2 oxopentanoate. The chain is 3-isopropylmalate dehydrogenase from Blochmanniella pennsylvanica (strain BPEN).